The chain runs to 474 residues: tRNA modification GTPase MnmE (474 aa).

The (6S)-5-formyl-5,6,7,8-tetrahydrofolate site is built by arginine 28, glutamate 92, and arginine 131. The 169-residue stretch at 227–395 (GIPVAIVGTT…LKGELTQIME (169 aa)) folds into the TrmE-type G domain. Asparagine 237 contributes to the K(+) binding site. GTP contacts are provided by residues 237–242 (NVGKST), 256–262 (SDIHGTT), 281–284 (DTAG), and 376–378 (SAR). Serine 241 serves as a coordination point for Mg(2+). Serine 256, isoleucine 258, and threonine 261 together coordinate K(+). Residue threonine 262 coordinates Mg(2+). A (6S)-5-formyl-5,6,7,8-tetrahydrofolate-binding site is contributed by lysine 474.

This sequence belongs to the TRAFAC class TrmE-Era-EngA-EngB-Septin-like GTPase superfamily. TrmE GTPase family. In terms of assembly, homodimer. Heterotetramer of two MnmE and two MnmG subunits. K(+) is required as a cofactor.

The protein localises to the cytoplasm. Exhibits a very high intrinsic GTPase hydrolysis rate. Involved in the addition of a carboxymethylaminomethyl (cmnm) group at the wobble position (U34) of certain tRNAs, forming tRNA-cmnm(5)s(2)U34. This is tRNA modification GTPase MnmE from Porphyromonas gingivalis (strain ATCC BAA-308 / W83).